We begin with the raw amino-acid sequence, 565 residues long: NAD-dependent malic enzyme (565 aa).

Tyrosine 104 serves as the catalytic Proton donor. An NAD(+)-binding site is contributed by arginine 157. Lysine 175 acts as the Proton acceptor in catalysis. A divalent metal cation contacts are provided by glutamate 246, aspartate 247, and aspartate 270. NAD(+) is bound by residues aspartate 270 and asparagine 418.

The protein belongs to the malic enzymes family. In terms of assembly, homotetramer. Requires Mg(2+) as cofactor. Mn(2+) serves as cofactor.

The catalysed reaction is (S)-malate + NAD(+) = pyruvate + CO2 + NADH. It catalyses the reaction oxaloacetate + H(+) = pyruvate + CO2. This is NAD-dependent malic enzyme from Yersinia pseudotuberculosis serotype O:1b (strain IP 31758).